The primary structure comprises 506 residues: MSVLIVTSLGDIVIDLHSDKCPLTCKNFLKLCKIKYYNGCLFHTVQKDFTAQTGDPTGTGAGGDSIYKFLYGEQARFYKDEIHLDLKHSKTGTVAMASGGENLNASQFYFTLRDDLDYLDGKHTVFGQIAEGFDTLTRINEAYVDPKNRPYKNIRIKHTHILDDPFDDPPQLAEMMPDASPEGKPKEEVKDDVRLEDDWVPMDEELGAQELEEVIREKAAHSSAVVLESIGDIPEAEVKPPDNVLFVCKLNPVTEDEDLHTIFSRFGTVVSADVIRDFKTGDSLCYAFIEFENKESCEQAYFKMDNALIDDRRIHVDFSQSVSKLWSQFRQKDSQKGKGNGCFKCGSTDHIAKDCVGGPSSKFIVKDQNRQHGGGEGYEMVFEGDVHETPKHNSHERERSEKIQRRSPHGNGEGKRQHRDERDDGRRQHDREDARELERKHRERKERESREDEDRRRRRRREESRDKESRRERDEDDHRSHRDYKERRRERDDRHGREARHERRDR.

Positions 1–161 constitute a PPIase cyclophilin-type domain; the sequence is MSVLIVTSLG…KNIRIKHTHI (161 aa). The 79-residue stretch at 243–321 folds into the RRM domain; it reads NVLFVCKLNP…RRIHVDFSQS (79 aa). The CCHC-type zinc-finger motif lies at 341–357; that stretch reads GCFKCGSTDHIAKDCVG. Basic and acidic residues-rich tracts occupy residues 388-404 and 412-506; these read ETPKHNSHERERSEKIQ and GEGK…RRDR. The disordered stretch occupies residues 388 to 506; the sequence is ETPKHNSHER…REARHERRDR (119 aa).

This sequence belongs to the cyclophilin-type PPIase family. Component of the BZR1 complex. Interacts with NRPB1 (via CTD domain), SCL28, SCL30, SCL30A, SCL33, SC35, SR30, SR34, RSZ21, RS2Z33, RS31 and RS40. In terms of tissue distribution, ubiquitous.

The protein localises to the nucleus. It catalyses the reaction [protein]-peptidylproline (omega=180) = [protein]-peptidylproline (omega=0). Its function is as follows. PPIases accelerate the folding of proteins. It catalyzes the cis-trans isomerization of proline imidic peptide bonds in oligopeptides. Influences somehow regulation of RNA pol II (CTD) phosphorylation. Binds RNA with preferences for GC-rich sequences. Probably involved in activities connecting transcription and pre-mRNA processing. Involved in brassinostroid response. This Arabidopsis thaliana (Mouse-ear cress) protein is Peptidyl-prolyl cis-trans isomerase CYP59 (CYP59).